A 1143-amino-acid chain; its full sequence is MVQRISLKNKLLPDLVEIQRDSFKWFLLEGLTEVLEFFPNISDPTSRLELQLFGKEYKIKFPRYSVRQAKSRDRTYSAQIYVPAKLTRKDIDLPSKDQNKTIKSLDLSSNHLQFSAEKQIKNKKYKKRLVFIGDLPIMTNRGTFIVSGTERVIINQIIRSPGIYYKQDIDKNGKQIYSASLISNRGSWLKFEIDPKGEIWIRIDKTHKVNAYIFLRAIGLNKNEIQKGLSKYAFLISASQSYSVKELAKEIGKNDIEEVTDEEALLIVYSKLRPNEPATVPVAKQMLYSRFFDPKRYDLGEVGRYKINKKLGLNIPKTFRVLSPQDILSSIDYLINIKDKNSGNLDDIDHLGNRRVRSVGELLQNQFRVGLNRLERIIRERMMICDIDSLSLSNLINPKPLIASVREFFGSSQLSQFMDQTNPVAELTHKRRISALGPGGFNKDRAGFAVRDLHPSHYGRICPIETPEGPNAGLIGSLATCARVNIFGFIETPFYPVHNGQVDYSNNPIYLTADEEDDFRVAPGDVKVNVQNYIEGDIIPVRYRQEFVTTIPNQVDYIAISPIQVISAATSLIPFLEHDDANRALMGSNMQRQAVPLLYPEKPIIGTGLETKIARDSGMVVISRTSGCVNYVSANKIGIQDNNGRTVLYRLKKYYRSNQDTCINQRPIVWVGEKIVVGQTLADGASTDCGEIALGRNILVAYMPWEGYNYEDAFLISERLVYEDVYTSIHIEKYEVECRQTKLGPEEITREIPNVSDHSLKDLDRNGIVVCGSWVEAGDILVGKITPKGEADQLPEGKLLRAIFGEKARDVRDTSLRLPNAAKGRVVNVRVFTRQKGDELPPGTNAMIRVYVAQKRKIQVGDKMAGRHGNKGIISRILPKQDMPYLCDGTPVDIVLNPLGVPSRMNVGQVFECLLGLAGGYLDKRFKIIPFDEMYGAEASRALVNRKLQEASILTKNKWIFNDQHPGKMQVFDGRTGEPFDNPVTIGRAYMLKLVHLVDDKIHARSTGPYSLVTQQPLGGRAQHGGQRLGEMEVWALEAFGAAYTLQELLTVKSDDMQARNEALNAIVKGKPIPKPGTPESFKVLMRELQSLGLDIAVHKLKLFENGQRRTVEVDLMSDSKEDRVARSNYEVLPVDDFEQFLY.

The protein belongs to the RNA polymerase beta chain family. In terms of assembly, in plastids the minimal PEP RNA polymerase catalytic core is composed of four subunits: alpha, beta, beta', and beta''. When a (nuclear-encoded) sigma factor is associated with the core the holoenzyme is formed, which can initiate transcription.

It localises to the plastid. Its subcellular location is the chloroplast. The catalysed reaction is RNA(n) + a ribonucleoside 5'-triphosphate = RNA(n+1) + diphosphate. In terms of biological role, DNA-dependent RNA polymerase catalyzes the transcription of DNA into RNA using the four ribonucleoside triphosphates as substrates. This Porphyra purpurea (Red seaweed) protein is DNA-directed RNA polymerase subunit beta.